The primary structure comprises 214 residues: Adenylate kinase (214 aa).

10 to 15 (GAGKGT) provides a ligand contact to ATP. The interval 30 to 59 (STGDMLRAAVKAGTPLGLEAKKVMDAGQLV) is NMP. Residues threonine 31, arginine 36, 57-59 (QLV), 85-88 (GFPR), and glutamine 92 each bind AMP. Residues 122–159 (GRRVHPGSGRVYHIVFNQPKVEGKDDVTGEDLAIRPDD) are LID. ATP contacts are provided by residues arginine 123 and 132 to 133 (VY). AMP contacts are provided by arginine 156 and arginine 167. Glutamine 200 is a binding site for ATP.

This sequence belongs to the adenylate kinase family. As to quaternary structure, monomer.

The protein localises to the cytoplasm. It carries out the reaction AMP + ATP = 2 ADP. It participates in purine metabolism; AMP biosynthesis via salvage pathway; AMP from ADP: step 1/1. In terms of biological role, catalyzes the reversible transfer of the terminal phosphate group between ATP and AMP. Plays an important role in cellular energy homeostasis and in adenine nucleotide metabolism. The protein is Adenylate kinase of Shewanella halifaxensis (strain HAW-EB4).